Consider the following 505-residue polypeptide: Methylmalonyl-CoA carboxyltransferase 5S subunit (505 aa).

The Pyruvate carboxyltransferase domain maps to 14–276 (VGITELVLRD…TTNLDYDRLH (263 aa)). Residues 22-26 (RDAHQ), Ala-59, and Lys-184 each bind substrate. Co(2+) is bound at residue Asp-23. 3 residues coordinate Co(2+): Lys-184, His-215, and His-217. An N6-carboxylysine; partial modification is found at Lys-184.

As to quaternary structure, homodimer. Transcarboxylase is composed of three subunits: 1.3S, 5S, and 12S. The core of the enzyme is composed of six 12S subunits. On each side of the core there are three pairs of 5S subunits. Each 5S dimer is attached to the core by two 1.3S subunits. Thus the total number of chains is 30 (6 + 12 + 12). Requires Co(2+) as cofactor. Lys-184 is carboxylated in the free enzyme and helps to coordinate the cobalt ion. Lys-184 is partially carboxylated in the complex with pyruvate, but is not carboxylated in the oxaloacetate-bound form.

The catalysed reaction is (S)-methylmalonyl-CoA + pyruvate = propanoyl-CoA + oxaloacetate. In terms of biological role, the 5S subunit specifically catalyzes the transfer of the carboxyl group from biotin of the 1.3S subunit to pyruvate to form oxaloacetate and 1.3S biotin. In Propionibacterium freudenreichii subsp. shermanii, this protein is Methylmalonyl-CoA carboxyltransferase 5S subunit.